We begin with the raw amino-acid sequence, 266 residues long: Glucagon-1 (266 aa).

A signal peptide spans 1-20 (MKSTCYMIGILLMILQNTYQ). 6 propeptides span residues 21–50 (SPVPETDANSRSVKAARNEAVDDSEQLKEV), 84–95 (SGELSRRNADYE), 136–140 (NAEFE), 175–178 (IRYS), 213–224 (NFSEVHSVEEMD), and 261–266 (DLLEEQ). Over residues 23 to 32 (VPETDANSRS) the composition is skewed to polar residues. Positions 23 to 44 (VPETDANSRSVKAARNEAVDDS) are disordered.

The protein belongs to the glucagon family.

The protein resides in the secreted. Its function is as follows. Promotes hydrolysis of glycogen and lipids, and raises the blood sugar level. The chain is Glucagon-1 (gcg1) from Xenopus laevis (African clawed frog).